The primary structure comprises 317 residues: Protoheme IX farnesyltransferase (317 aa).

8 helical membrane passes run 44 to 64, 93 to 113, 116 to 136, 143 to 163, 178 to 198, 221 to 241, 243 to 263, and 288 to 308; these read IGLILLTLLGGWMGAAAANTF, HASVFAWTLTVVSFLWLWVLC, VLAGLFILLTIFFYIFVYTKY, LNIVWGGAAGCMPVVVGWAVI, AIVLFMVIFFWTPPHTWALAM, VTRQIVWYTVATVLTTFLLIP, ASWIHAIIAVVSGVWFLVMAV, and LAVYFVGLSIDAVLGWETIGG.

It belongs to the UbiA prenyltransferase family. Protoheme IX farnesyltransferase subfamily.

Its subcellular location is the cell membrane. The enzyme catalyses heme b + (2E,6E)-farnesyl diphosphate + H2O = Fe(II)-heme o + diphosphate. It functions in the pathway porphyrin-containing compound metabolism; heme O biosynthesis; heme O from protoheme: step 1/1. Converts heme B (protoheme IX) to heme O by substitution of the vinyl group on carbon 2 of heme B porphyrin ring with a hydroxyethyl farnesyl side group. This chain is Protoheme IX farnesyltransferase, found in Corynebacterium diphtheriae (strain ATCC 700971 / NCTC 13129 / Biotype gravis).